A 237-amino-acid polypeptide reads, in one-letter code: Ribonuclease PH (237 aa).

Phosphate is bound by residues Arg-86 and 124–126; that span reads GTR.

This sequence belongs to the RNase PH family. As to quaternary structure, homohexameric ring arranged as a trimer of dimers.

It catalyses the reaction tRNA(n+1) + phosphate = tRNA(n) + a ribonucleoside 5'-diphosphate. Its function is as follows. Phosphorolytic 3'-5' exoribonuclease that plays an important role in tRNA 3'-end maturation. Removes nucleotide residues following the 3'-CCA terminus of tRNAs; can also add nucleotides to the ends of RNA molecules by using nucleoside diphosphates as substrates, but this may not be physiologically important. Probably plays a role in initiation of 16S rRNA degradation (leading to ribosome degradation) during starvation. In Beijerinckia indica subsp. indica (strain ATCC 9039 / DSM 1715 / NCIMB 8712), this protein is Ribonuclease PH.